Here is a 564-residue protein sequence, read N- to C-terminus: Nucleoprotein (564 aa).

Residues 54–236 form a binding site for the cap structure m7GTP region; sequence LRKTKRGEED…VTKDESSINI (183 aa). The Mn(2+) site is built by D380 and E382. The Zn(2+) site is built by E390, C497, H500, and C525. D529 contributes to the Mn(2+) binding site.

This sequence belongs to the arenaviridae nucleocapsid protein family. As to quaternary structure, homomultimerizes to form the nucleocapsid. Binds to viral genomic RNA. Interacts with glycoprotein G2. Interacts with protein Z; this interaction probably directs the encapsidated genome to budding sites. Interacts with protein L; this interaction does not interfere with Z-L interaction. Interacts with host IKBKE (via Protein kinase domain); the interaction inhibits IKBKE kinase activity.

Its subcellular location is the virion. The protein resides in the host cytoplasm. Functionally, encapsidates the genome, protecting it from nucleases. The encapsidated genomic RNA is termed the nucleocapsid (NC). Serves as template for viral transcription and replication. The increased presence of protein N in host cell does not seem to trigger the switch from transcription to replication as observed in other negative strain RNA viruses. Through the interaction with host IKBKE, strongly inhibits the phosphorylation and nuclear translocation of host IRF3, a protein involved in interferon activation pathway, leading to the inhibition of interferon-beta and IRF3-dependent promoters activation. Also encodes a functional 3'-5' exoribonuclease that degrades preferentially dsRNA substrates and thereby participates in the suppression of interferon induction. The polypeptide is Nucleoprotein (Akodon azarae (Azara's grass mouse)).